The following is a 1130-amino-acid chain: Putative beta-hexosaminidase (1130 aa).

The N-terminal stretch at 1 to 23 (MKWVKSGVGILGILLIICHAVTS) is a signal peptide. Composition is skewed to low complexity over residues 1001-1030 (PGQM…LPAQ) and 1037-1072 (LTGQ…QRTG). Disordered stretches follow at residues 1001–1075 (PGQM…GVVP) and 1102–1130 (QMRG…QQAG).

This sequence belongs to the glycosyl hydrolase 20 family. Prismatic layer of shell (at protein level). Expressed primarily in the mantle with highest level in the mantle edge and lower level in the mantle pallium.

The protein resides in the secreted. The catalysed reaction is Hydrolysis of terminal non-reducing N-acetyl-D-hexosamine residues in N-acetyl-beta-D-hexosaminides.. The protein operates within glycan degradation; chitin degradation. The polypeptide is Putative beta-hexosaminidase (Pinctada maxima (Silver-lipped pearl oyster)).